The following is a 953-amino-acid chain: Atromentin synthetase invA5 (953 aa).

The interval 37–460 is adenylation (A) domain; sequence SRAVSQYPDH…SGRIKDTVIV (424 aa). Positions 592–670 constitute a Carrier domain; it reads APSTETEKTL…SLAKYVDSLI (79 aa). A thiolation and peptide carrier (T) domain region spans residues 597-667; the sequence is TEKTLAGIYA…VISSLAKYVD (71 aa). Serine 629 bears the O-(pantetheine 4'-phosphoryl)serine mark. The thioesterase (TE) domain stretch occupies residues 693–795; that stretch reads PIFMVHPGVG…FTGLINIPPN (103 aa).

The protein belongs to the ATP-dependent AMP-binding enzyme family.

It functions in the pathway secondary metabolite biosynthesis. Functionally, an L-tyrosine:2-oxoglutarate aminotransferase (probably invD) and atromentin synthetase invA5 catalyze consecutive steps to turn over L-tyrosine into atromentin, which represents the generic precursor molecule for the entire terphenylquinone and pulvinic acid family of pigments, which are widely distributed secondary metabolites in homobasidiomycetes. The first step catalyzed by the aminotransferase converts L-tyrosine in to 4-hydroxyphenylpyruvate (4-HPP). Adenylation of two 4-HPP monomers by the invA5 adenylation (A) domain, covalent tethering of the monomers as a thioester and oxoester onto the invA5 thiolation (T) and thioesterase (TE) domains, respectively, and symmetric C-C-bond formation between two monomers catalyzed by the invA5 TE domain leads to atromentin. This chain is Atromentin synthetase invA5 (invA5), found in Paxillus involutus (Naked brimcap).